The sequence spans 133 residues: ATP synthase epsilon chain (133 aa).

It belongs to the ATPase epsilon chain family. As to quaternary structure, F-type ATPases have 2 components, CF(1) - the catalytic core - and CF(0) - the membrane proton channel. CF(1) has five subunits: alpha(3), beta(3), gamma(1), delta(1), epsilon(1). CF(0) has three main subunits: a, b and c.

The protein localises to the cell membrane. Its function is as follows. Produces ATP from ADP in the presence of a proton gradient across the membrane. This chain is ATP synthase epsilon chain, found in Halalkalibacterium halodurans (strain ATCC BAA-125 / DSM 18197 / FERM 7344 / JCM 9153 / C-125) (Bacillus halodurans).